The chain runs to 130 residues: Small ribosomal subunit protein uS9 (130 aa).

Belongs to the universal ribosomal protein uS9 family.

This is Small ribosomal subunit protein uS9 from Shewanella halifaxensis (strain HAW-EB4).